The sequence spans 655 residues: p-hydroxybenzoic acid efflux pump subunit AaeB (655 aa).

Transmembrane regions (helical) follow at residues 13 to 33, 38 to 58, 69 to 89, 93 to 113, 121 to 141, 152 to 172, 370 to 390, 407 to 427, 431 to 451, 459 to 479, and 482 to 502; these read FAVKLACAIVLALFVGFHFQL, WAVLTAAIVAAGPAFAAGGEP, LRIIGTFIGCIAALTIIITMI, LLMILVCCIWAGFCTWISSLV, WGLSGYTALIIVITIQAEPLL, EIVIGIVCAIMADLLFSPRSV, LFWLWTGWTSGSGAMVMIAVV, FIYGTLAALPLGLLYFLVIIP, QSMLLLCLSLAVLGFFLGIEV, MGALASTINIIVLDNPMTFHF, and FLDSALGQIVGCMMAFIVILL.

This sequence belongs to the aromatic acid exporter ArAE (TC 2.A.85) family.

It localises to the cell inner membrane. Its function is as follows. Forms an efflux pump with AaeA. Could function as a metabolic relief valve, allowing to eliminate certain compounds when they accumulate to high levels in the cell. This chain is p-hydroxybenzoic acid efflux pump subunit AaeB, found in Citrobacter koseri (strain ATCC BAA-895 / CDC 4225-83 / SGSC4696).